An 89-amino-acid chain; its full sequence is MSDNNEKQTLRTVEGRVVSNKMDKTVTVLVERQVKHPLYGKYIKRSSKLHAHDADNACNEGDVVRVTEIAPMSKTKNWRVVEIVTRAAV.

The protein belongs to the universal ribosomal protein uS17 family. In terms of assembly, part of the 30S ribosomal subunit.

One of the primary rRNA binding proteins, it binds specifically to the 5'-end of 16S ribosomal RNA. The polypeptide is Small ribosomal subunit protein uS17 (Xanthomonas campestris pv. campestris (strain 8004)).